Consider the following 286-residue polypeptide: Cytochrome bo(3) ubiquinol oxidase subunit 2 (286 aa).

Residues 1-24 form the signal peptide; that stretch reads MQFIKYKSYILKFLLVSCIFCING. C25 carries N-palmitoyl cysteine lipidation. C25 carries the S-diacylglycerol cysteine lipid modification. Residues 25-44 are Extracellular-facing; sequence CDCTILCPNGLIAQEQRFVL. Residues 45–67 traverse the membrane as a helical segment; that stretch reads FVSFFTMLLIIIPVIFMTIFFVL. Residues 68 to 85 are Cytoplasmic-facing; it reads RYRESNFSKTYDPKWSHS. The helical transmembrane segment at 86–108 threads the bilayer; it reads NIIELLIWGIPIIIIVFLSIFSW. Topologically, residues 109–286 are extracellular; the sequence is KSVHDLDPKK…VIANVLKISL (178 aa).

This sequence belongs to the cytochrome c oxidase subunit 2 family. Heterooctamer of two A chains, two B chains, two C chains and two D chains.

The protein resides in the cell membrane. Its function is as follows. Cytochrome bo(3) ubiquinol terminal oxidase is the component of the aerobic respiratory chain of E.coli that predominates when cells are grown at high aeration. Has proton pump activity across the membrane in addition to electron transfer, pumping 2 protons/electron. The polypeptide is Cytochrome bo(3) ubiquinol oxidase subunit 2 (cyoA) (Buchnera aphidicola subsp. Baizongia pistaciae (strain Bp)).